The primary structure comprises 70 residues: DNA-directed RNA polymerase subunit omega (70 aa).

The protein belongs to the RNA polymerase subunit omega family. The RNAP catalytic core consists of 2 alpha, 1 beta, 1 beta' and 1 omega subunit. When a sigma factor is associated with the core the holoenzyme is formed, which can initiate transcription.

It carries out the reaction RNA(n) + a ribonucleoside 5'-triphosphate = RNA(n+1) + diphosphate. Its function is as follows. Promotes RNA polymerase assembly. Latches the N- and C-terminal regions of the beta' subunit thereby facilitating its interaction with the beta and alpha subunits. This chain is DNA-directed RNA polymerase subunit omega, found in Thermoanaerobacter sp. (strain X514).